A 339-amino-acid chain; its full sequence is Dihydroorotate dehydrogenase (quinone) (339 aa).

Residues 62 to 66 and Thr-86 contribute to the FMN site; that span reads AGMDK. Lys-66 serves as a coordination point for substrate. 111–115 contributes to the substrate binding site; the sequence is NRMGF. The FMN site is built by Asn-139 and Asn-172. Residue Asn-172 participates in substrate binding. Ser-175 (nucleophile) is an active-site residue. Asn-177 lines the substrate pocket. FMN is bound by residues Lys-217 and Thr-245. 246 to 247 contributes to the substrate binding site; it reads NT. Residues Gly-268, Gly-297, and 318 to 319 contribute to the FMN site; that span reads FS.

The protein belongs to the dihydroorotate dehydrogenase family. Type 2 subfamily. Monomer. The cofactor is FMN.

The protein resides in the cell membrane. The enzyme catalyses (S)-dihydroorotate + a quinone = orotate + a quinol. It participates in pyrimidine metabolism; UMP biosynthesis via de novo pathway; orotate from (S)-dihydroorotate (quinone route): step 1/1. Functionally, catalyzes the conversion of dihydroorotate to orotate with quinone as electron acceptor. In Shewanella halifaxensis (strain HAW-EB4), this protein is Dihydroorotate dehydrogenase (quinone).